Reading from the N-terminus, the 517-residue chain is Nuclear transcription factor Y subunit alpha (517 aa).

Polar residues predominate over residues M1–R11. 4 disordered regions span residues M1 to H95, R121 to Y183, E252 to G281, and A304 to S517. 2 stretches are compositionally biased toward low complexity: residues N26–S81 and N126–Y183. Positions Y232 to N255 match the Subunit association domain (SAD) motif. The NFYA/HAP2-type DNA-binding region spans K262–K287. Residues A304–N345 show a composition bias toward low complexity. Over residues S359 to S371 the composition is skewed to acidic residues. 2 stretches are compositionally biased toward low complexity: residues K377–S388 and N408–N423. The segment covering P438–A447 has biased composition (polar residues). Low complexity predominate over residues Q448 to S517.

Belongs to the NFYA/HAP2 subunit family. As to quaternary structure, heterotrimeric transcription factor composed of three components, nfyA, nfyB and nfyC. nfyB and nfyC must interact and dimerize for nfyA association and DNA binding.

The protein localises to the nucleus. Component of the NF-Y/HAP transcription factor complex. The NF-Y complex stimulates the transcription of various genes by recognizing and binding to a CCAAT motif in promoters. This chain is Nuclear transcription factor Y subunit alpha (nfyA), found in Dictyostelium discoideum (Social amoeba).